We begin with the raw amino-acid sequence, 322 residues long: Cytochrome c biogenesis protein CcsA (322 aa).

8 consecutive transmembrane segments (helical) span residues Ile9–Leu29, Gly44–Gly64, Leu71–Phe91, Phe97–Leu117, Met143–Ile163, Ile225–Asn245, Trp254–Ile274, and Ala286–Leu306.

This sequence belongs to the CcmF/CycK/Ccl1/NrfE/CcsA family. In terms of assembly, may interact with Ccs1.

The protein localises to the plastid. Its subcellular location is the chloroplast thylakoid membrane. Required during biogenesis of c-type cytochromes (cytochrome c6 and cytochrome f) at the step of heme attachment. This chain is Cytochrome c biogenesis protein CcsA, found in Manihot esculenta (Cassava).